Consider the following 395-residue polypeptide: Protein PELOTA 2 (395 aa).

It belongs to the eukaryotic release factor 1 family. Pelota subfamily. It depends on a divalent metal cation as a cofactor.

It localises to the cytoplasm. Its subcellular location is the nucleus. In terms of biological role, component of the Pelota-HBS1L complex, a complex that recognizes stalled ribosomes and triggers the No-Go Decay (NGD) pathway. In the Pelota-HBS1L complex, pelo recognizes ribosomes stalled at the 3' end of an mRNA and engages stalled ribosomes by destabilizing mRNA in the mRNA channel. Following ribosome-binding, the Pelota-HBS1L complex promotes the disassembly of stalled ribosomes, followed by degradation of damaged mRNAs as part of the NGD pathway. The chain is Protein PELOTA 2 (PEL2) from Arabidopsis thaliana (Mouse-ear cress).